A 324-amino-acid polypeptide reads, in one-letter code: Fructose-1,6-bisphosphatase class 1 (324 aa).

Mg(2+) is bound by residues E88, D107, L109, and D110. Substrate-binding positions include 110–113, N199, and K265; that span reads DGSS. E271 contacts Mg(2+).

The protein belongs to the FBPase class 1 family. In terms of assembly, homotetramer. The cofactor is Mg(2+).

It is found in the cytoplasm. The catalysed reaction is beta-D-fructose 1,6-bisphosphate + H2O = beta-D-fructose 6-phosphate + phosphate. It participates in carbohydrate biosynthesis; gluconeogenesis. The polypeptide is Fructose-1,6-bisphosphatase class 1 (Neisseria meningitidis serogroup B (strain ATCC BAA-335 / MC58)).